Here is a 494-residue protein sequence, read N- to C-terminus: Cobyrinate a,c-diamide synthase (494 aa).

Residues 270-475 form the GATase cobBQ-type domain; the sequence is KIGVALDEAF…AHLHGVAYRE (206 aa). Residue Cys-352 is the Nucleophile of the active site.

Belongs to the CobB/CbiA family. Mg(2+) is required as a cofactor.

The catalysed reaction is cob(II)yrinate + 2 L-glutamine + 2 ATP + 2 H2O = cob(II)yrinate a,c diamide + 2 L-glutamate + 2 ADP + 2 phosphate + 2 H(+). The enzyme catalyses Ni-sirohydrochlorin + 2 L-glutamine + 2 ATP + 2 H2O = Ni-sirohydrochlorin a,c-diamide + 2 L-glutamate + 2 ADP + 2 phosphate + 2 H(+). Its pathway is cofactor biosynthesis; adenosylcobalamin biosynthesis; cob(II)yrinate a,c-diamide from sirohydrochlorin (anaerobic route): step 10/10. Functionally, catalyzes the ATP-dependent amidation of the two carboxylate groups at positions a and c of cobyrinate, using either L-glutamine or ammonia as the nitrogen source (Potential). Involved in the biosynthesis of the unique nickel-containing tetrapyrrole coenzyme F430, the prosthetic group of methyl-coenzyme M reductase (MCR), which plays a key role in methanogenesis and anaerobic methane oxidation. Catalyzes the ATP-dependent amidation of the two carboxylate groups at positions a and c of Ni-sirohydrochlorin, using L-glutamine or ammonia as the nitrogen source. Also able to use sirohydrochlorin as substrate, but only produces a monoamide species in a much slower reaction. Unable to use other metallosirohydrochlorins such as sirohaem and Co-sirohydrochlorin. In Methanosarcina barkeri (strain Fusaro / DSM 804), this protein is Cobyrinate a,c-diamide synthase.